Reading from the N-terminus, the 433-residue chain is Enolase (433 aa).

Residue Q167 participates in (2R)-2-phosphoglycerate binding. The active-site Proton donor is the E209. D246, E291, and D318 together coordinate Mg(2+). Residues K343, R372, S373, and K394 each contribute to the (2R)-2-phosphoglycerate site. Catalysis depends on K343, which acts as the Proton acceptor.

It belongs to the enolase family. As to quaternary structure, component of the RNA degradosome, a multiprotein complex involved in RNA processing and mRNA degradation. Mg(2+) serves as cofactor.

Its subcellular location is the cytoplasm. The protein resides in the secreted. It is found in the cell surface. It catalyses the reaction (2R)-2-phosphoglycerate = phosphoenolpyruvate + H2O. The protein operates within carbohydrate degradation; glycolysis; pyruvate from D-glyceraldehyde 3-phosphate: step 4/5. In terms of biological role, catalyzes the reversible conversion of 2-phosphoglycerate (2-PG) into phosphoenolpyruvate (PEP). It is essential for the degradation of carbohydrates via glycolysis. This is Enolase from Edwardsiella ictaluri (strain 93-146).